Consider the following 89-residue polypeptide: Small ribosomal subunit protein uS15 (89 aa).

Over residues methionine 1–valine 11 the composition is skewed to basic and acidic residues. The segment at methionine 1–proline 25 is disordered.

This sequence belongs to the universal ribosomal protein uS15 family. In terms of assembly, part of the 30S ribosomal subunit. Forms a bridge to the 50S subunit in the 70S ribosome, contacting the 23S rRNA.

One of the primary rRNA binding proteins, it binds directly to 16S rRNA where it helps nucleate assembly of the platform of the 30S subunit by binding and bridging several RNA helices of the 16S rRNA. In terms of biological role, forms an intersubunit bridge (bridge B4) with the 23S rRNA of the 50S subunit in the ribosome. This is Small ribosomal subunit protein uS15 from Nitrobacter winogradskyi (strain ATCC 25391 / DSM 10237 / CIP 104748 / NCIMB 11846 / Nb-255).